The sequence spans 655 residues: Acetyl-coenzyme A synthetase (655 aa).

Residues 193-196 (RGNK) and Thr-313 each bind CoA. Residues 389 to 391 (GEP), 413 to 418 (DTWWQT), Asp-502, and Arg-517 contribute to the ATP site. Ser-525 serves as a coordination point for CoA. Residue Arg-528 coordinates ATP. Mg(2+) contacts are provided by Val-539 and His-541. CoA is bound at residue Arg-586. At Lys-611 the chain carries N6-acetyllysine.

It belongs to the ATP-dependent AMP-binding enzyme family. It depends on Mg(2+) as a cofactor. In terms of processing, acetylated. Deacetylation by the SIR2-homolog deacetylase activates the enzyme.

It carries out the reaction acetate + ATP + CoA = acetyl-CoA + AMP + diphosphate. Its function is as follows. Catalyzes the conversion of acetate into acetyl-CoA (AcCoA), an essential intermediate at the junction of anabolic and catabolic pathways. AcsA undergoes a two-step reaction. In the first half reaction, AcsA combines acetate with ATP to form acetyl-adenylate (AcAMP) intermediate. In the second half reaction, it can then transfer the acetyl group from AcAMP to the sulfhydryl group of CoA, forming the product AcCoA. This is Acetyl-coenzyme A synthetase from Psychrobacter cryohalolentis (strain ATCC BAA-1226 / DSM 17306 / VKM B-2378 / K5).